Reading from the N-terminus, the 152-residue chain is Large ribosomal subunit protein bL9 (152 aa).

The protein belongs to the bacterial ribosomal protein bL9 family.

Binds to the 23S rRNA. The polypeptide is Large ribosomal subunit protein bL9 (Nocardia farcinica (strain IFM 10152)).